Reading from the N-terminus, the 910-residue chain is UPF0182 protein Acid_6445 (910 aa).

Helical transmembrane passes span 17–37 (ITLL…AGYA), 56–76 (LYYG…ALWI), 101–121 (LALL…WTVV), 157–177 (LLRS…WIAA), 210–229 (FLRG…FYLG), 252–272 (IGLP…AFVA), and 276–296 (WFLA…PRIV).

The protein belongs to the UPF0182 family.

Its subcellular location is the cell membrane. The sequence is that of UPF0182 protein Acid_6445 from Solibacter usitatus (strain Ellin6076).